Consider the following 177-residue polypeptide: Peptide methionine sulfoxide reductase MsrA (177 aa).

Cysteine 11 is a catalytic residue.

The protein belongs to the MsrA Met sulfoxide reductase family.

The enzyme catalyses L-methionyl-[protein] + [thioredoxin]-disulfide + H2O = L-methionyl-(S)-S-oxide-[protein] + [thioredoxin]-dithiol. The catalysed reaction is [thioredoxin]-disulfide + L-methionine + H2O = L-methionine (S)-S-oxide + [thioredoxin]-dithiol. Functionally, has an important function as a repair enzyme for proteins that have been inactivated by oxidation. Catalyzes the reversible oxidation-reduction of methionine sulfoxide in proteins to methionine. The polypeptide is Peptide methionine sulfoxide reductase MsrA (Trichodesmium erythraeum (strain IMS101)).